Reading from the N-terminus, the 264-residue chain is Small ribosomal subunit protein uS2 (264 aa).

Residues 233–264 (AQTQAGGKAEQEAPATEEAADAQTEEAATPAE) are disordered.

The protein belongs to the universal ribosomal protein uS2 family.

In Psychrobacter arcticus (strain DSM 17307 / VKM B-2377 / 273-4), this protein is Small ribosomal subunit protein uS2.